The sequence spans 379 residues: Alanine racemase (379 aa).

K37 (proton acceptor; specific for D-alanine) is an active-site residue. K37 carries the N6-(pyridoxal phosphate)lysine modification. R137 is a binding site for substrate. The Proton acceptor; specific for L-alanine role is filled by Y269. Substrate is bound at residue M317.

This sequence belongs to the alanine racemase family. Requires pyridoxal 5'-phosphate as cofactor.

It carries out the reaction L-alanine = D-alanine. Its pathway is amino-acid biosynthesis; D-alanine biosynthesis; D-alanine from L-alanine: step 1/1. Catalyzes the interconversion of L-alanine and D-alanine. May also act on other amino acids. This chain is Alanine racemase (alr), found in Citrifermentans bemidjiense (strain ATCC BAA-1014 / DSM 16622 / JCM 12645 / Bem) (Geobacter bemidjiensis).